Here is a 138-residue protein sequence, read N- to C-terminus: Large ribosomal subunit protein uL16 (138 aa).

Positions 1–15 (MLSPKKVKYRKKQRG) are enriched in basic residues. Positions 1-21 (MLSPKKVKYRKKQRGRLSGEA) are disordered.

Belongs to the universal ribosomal protein uL16 family. In terms of assembly, part of the 50S ribosomal subunit.

In terms of biological role, binds 23S rRNA and is also seen to make contacts with the A and possibly P site tRNAs. The polypeptide is Large ribosomal subunit protein uL16 (Borrelia garinii subsp. bavariensis (strain ATCC BAA-2496 / DSM 23469 / PBi) (Borreliella bavariensis)).